We begin with the raw amino-acid sequence, 609 residues long: Frizzled and smoothened-like protein E (609 aa).

A signal peptide spans Met1–Gly20. Residues Glu21–Lys259 lie on the Extracellular side of the membrane. In terms of domain architecture, FZ spans Phe35–Pro192. 4 disulfides stabilise this stretch: Cys40/Cys118, Cys53/Cys111, Cys100/Cys149, and Cys138/Cys189. Asn75, Asn130, Asn172, Asn198, Asn217, and Asn245 each carry an N-linked (GlcNAc...) asparagine glycan. A helical membrane pass occupies residues Thr260 to Asn280. At Arg281–Asn288 the chain is on the cytoplasmic side. A helical membrane pass occupies residues Ile289–Phe309. Over Gly310–Ala337 the chain is Extracellular. Residues Met338–Phe358 traverse the membrane as a helical segment. Residues Cys359–Lys365 are Cytoplasmic-facing. The helical transmembrane segment at Leu366–Ile386 threads the bilayer. Topologically, residues Leu387–Trp408 are extracellular. Residues Phe409–Ile429 traverse the membrane as a helical segment. The Cytoplasmic segment spans residues Gly430 to Pro457. Residues Phe458–Val478 form a helical membrane-spanning segment. Topologically, residues Glu479–Asn511 are extracellular. The helical transmembrane segment at Tyr512–Ile532 threads the bilayer. Residues Tyr533 to Lys609 lie on the Cytoplasmic side of the membrane. Residues Glu559–Asp570 are compositionally biased toward polar residues. The interval Glu559 to Lys609 is disordered. Over residues Lys575–Asp598 the composition is skewed to low complexity. Residues Asn599–Lys609 show a composition bias toward basic and acidic residues.

This sequence belongs to the G-protein coupled receptor Fz/Smo family.

It localises to the membrane. In Dictyostelium discoideum (Social amoeba), this protein is Frizzled and smoothened-like protein E (fslE).